Here is a 113-residue protein sequence, read N- to C-terminus: Large ribosomal subunit protein uL22 (113 aa).

The protein belongs to the universal ribosomal protein uL22 family. In terms of assembly, part of the 50S ribosomal subunit.

This protein binds specifically to 23S rRNA; its binding is stimulated by other ribosomal proteins, e.g. L4, L17, and L20. It is important during the early stages of 50S assembly. It makes multiple contacts with different domains of the 23S rRNA in the assembled 50S subunit and ribosome. Functionally, the globular domain of the protein is located near the polypeptide exit tunnel on the outside of the subunit, while an extended beta-hairpin is found that lines the wall of the exit tunnel in the center of the 70S ribosome. The sequence is that of Large ribosomal subunit protein uL22 from Xanthomonas oryzae pv. oryzae (strain MAFF 311018).